The sequence spans 1175 residues: 1-phosphatidylinositol 4,5-bisphosphate phosphodiesterase beta-4 (1175 aa).

Alanine 2 bears the N-acetylalanine mark. In terms of domain architecture, PI-PLC X-box spans 313–463 (QEMDHPLAHY…LKRKILIKNK (151 aa)). Active-site residues include histidine 328 and histidine 375. The interval 482–511 (EAGESASPANILEDDNEEEIESADQEEEAH) is disordered. Over residues 493–508 (LEDDNEEEIESADQEE) the composition is skewed to acidic residues. Residues 565–681 (LSTMINYAQP…GYLLKPDFMR (117 aa)) form the PI-PLC Y-box domain. Residues 684-809 (DRTFDPFSET…SLRNEGNKPL (126 aa)) enclose the C2 domain. 2 disordered regions span residues 863-895 (ADVP…ELRP) and 1082-1110 (KISM…VREL). Polar residues-rich tracts occupy residues 881-895 (AKAN…ELRP) and 1085-1094 (MENSKAISQD). Phosphothreonine is present on threonine 886. A compositionally biased stretch (basic and acidic residues) spans 1095–1109 (KSIKNKAERERRVRE).

It depends on Ca(2+) as a cofactor. Preferentially expressed in the retina.

It is found in the cell membrane. It catalyses the reaction a 1,2-diacyl-sn-glycero-3-phospho-(1D-myo-inositol-4,5-bisphosphate) + H2O = 1D-myo-inositol 1,4,5-trisphosphate + a 1,2-diacyl-sn-glycerol + H(+). It carries out the reaction a 1,2-diacyl-sn-glycero-3-phospho-(1D-myo-inositol) + H2O = 1D-myo-inositol 1-phosphate + a 1,2-diacyl-sn-glycerol + H(+). In terms of biological role, activated phosphatidylinositol-specific phospholipase C enzymes catalyze the production of the second messenger molecules diacylglycerol (DAG) and inositol 1,4,5-trisphosphate (IP3) involved in G-protein coupled receptor signaling pathways. PLCB4 is a direct effector of the endothelin receptor signaling pathway that plays an essential role in lower jaw and middle ear structures development. This chain is 1-phosphatidylinositol 4,5-bisphosphate phosphodiesterase beta-4, found in Homo sapiens (Human).